The sequence spans 240 residues: MTIDTVILDIEGTVCPITFVKDTLFPYFLTKLPSILSSIEFPLSTSSSTNDDPIIQILKQLPESITISNESVFSYLKNLVDQDIKDPILKSLQGYIWEKGYEIGDLKAPIYKDSIKFIENFNKKIYIYSSGSIKAQILLFGHAEKDQESINLNPFLKGYFDITTAGFKNKSESYIKILNEINKSNDPSSVLFLSDNVNEVKSAIESGMNSYIVIRPGNAPLSDDDKSTYKTIHSLDELTL.

Mg(2+) is bound by residues D9 and E11. Residues 129-130 (SS) and K168 each bind substrate. D195 lines the Mg(2+) pocket.

This sequence belongs to the HAD-like hydrolase superfamily. MasA/MtnC family. In terms of assembly, monomer. Requires Mg(2+) as cofactor.

Its subcellular location is the cytoplasm. It localises to the nucleus. It catalyses the reaction 5-methylsulfanyl-2,3-dioxopentyl phosphate + H2O = 1,2-dihydroxy-5-(methylsulfanyl)pent-1-en-3-one + phosphate. It participates in amino-acid biosynthesis; L-methionine biosynthesis via salvage pathway; L-methionine from S-methyl-5-thio-alpha-D-ribose 1-phosphate: step 3/6. Its pathway is amino-acid biosynthesis; L-methionine biosynthesis via salvage pathway; L-methionine from S-methyl-5-thio-alpha-D-ribose 1-phosphate: step 4/6. Its function is as follows. Bifunctional enzyme that catalyzes the enolization of 2,3-diketo-5-methylthiopentyl-1-phosphate (DK-MTP-1-P) into the intermediate 2-hydroxy-3-keto-5-methylthiopentenyl-1-phosphate (HK-MTPenyl-1-P), which is then dephosphorylated to form the acireductone 1,2-dihydroxy-3-keto-5-methylthiopentene (DHK-MTPene). In Candida tropicalis (strain ATCC MYA-3404 / T1) (Yeast), this protein is Enolase-phosphatase E1.